Here is an 852-residue protein sequence, read N- to C-terminus: Protein Shroom1 (852 aa).

Residue Met1 is modified to N-acetylmethionine. Ser18 carries the phosphoserine modification. Disordered regions lie at residues 34–54, 81–109, and 125–218; these read SSFSAASGGPEPRTQSPGTDL, TSPRPRPAVAARSGPQPTEVPGTPGPLNR, and AAQA…ANQQ. Thr103 is modified (phosphothreonine). The span at 125–144 shows a compositional bias: low complexity; it reads AAQAAEPPSPPASRAAYRQR. Phosphoserine is present on residues Ser133 and Ser137. Residues 145 to 233 form the ASD1 domain; the sequence is LQGAQRRVLR…SEPGKLDRVG (89 aa). Basic and acidic residues predominate over residues 152–164; it reads VLRETSFQRKELR. Ser166, Ser190, and Ser224 each carry phosphoserine. 4 disordered regions span residues 276-320, 399-431, 464-496, and 823-852; these read LPET…GSGG, MRSPPDPHASQGPPASVHASDQPYGTGLGQRTG, SRPTSHTPTGTANDNIPTIDPTGLTTNPPTAAE, and DLGHHAPSPSPARPPGTCPPVQPPFPLLLT. The span at 279–289 shows a compositional bias: polar residues; it reads TQPQGSMNLDS. The segment covering 301–313 has biased composition (low complexity); that stretch reads ASRSRSASGEVLG. The span at 465-479 shows a compositional bias: polar residues; sequence RPTSHTPTGTANDNI. Positions 543-825 constitute an ASD2 domain; that stretch reads EELVQELARL…QLDAIRDDLG (283 aa). Over residues 830–852 the composition is skewed to pro residues; it reads SPSPARPPGTCPPVQPPFPLLLT.

Belongs to the shroom family. As to quaternary structure, interacts with F-actin.

The protein localises to the cytoplasm. It localises to the cytoskeleton. Functionally, may be involved in the assembly of microtubule arrays during cell elongation. The polypeptide is Protein Shroom1 (SHROOM1) (Homo sapiens (Human)).